A 311-amino-acid polypeptide reads, in one-letter code: Ketoisovalerate oxidoreductase subunit VorB (311 aa).

In terms of assembly, heterotetramer of one alpha, one beta, one delta and one gamma chain.

The catalysed reaction is 3-methyl-2-oxobutanoate + 2 oxidized [2Fe-2S]-[ferredoxin] + CoA = 2-methylpropanoyl-CoA + 2 reduced [2Fe-2S]-[ferredoxin] + CO2 + H(+). The protein is Ketoisovalerate oxidoreductase subunit VorB (vorB) of Pyrococcus horikoshii (strain ATCC 700860 / DSM 12428 / JCM 9974 / NBRC 100139 / OT-3).